The sequence spans 397 residues: Dual-specificity RNA methyltransferase RlmN (397 aa).

Glu-120 serves as the catalytic Proton acceptor. The Radical SAM core domain maps to 126–369 (ETDRGTLCVS…VRTPRGRDIL (244 aa)). A disulfide bond links Cys-133 and Cys-372. [4Fe-4S] cluster contacts are provided by Cys-140, Cys-144, and Cys-147. S-adenosyl-L-methionine-binding positions include 198–199 (GE), Ser-230, 252–254 (SLH), and Asn-329. The S-methylcysteine intermediate role is filled by Cys-372.

The protein belongs to the radical SAM superfamily. RlmN family. [4Fe-4S] cluster is required as a cofactor.

It is found in the cytoplasm. The enzyme catalyses adenosine(2503) in 23S rRNA + 2 reduced [2Fe-2S]-[ferredoxin] + 2 S-adenosyl-L-methionine = 2-methyladenosine(2503) in 23S rRNA + 5'-deoxyadenosine + L-methionine + 2 oxidized [2Fe-2S]-[ferredoxin] + S-adenosyl-L-homocysteine. It carries out the reaction adenosine(37) in tRNA + 2 reduced [2Fe-2S]-[ferredoxin] + 2 S-adenosyl-L-methionine = 2-methyladenosine(37) in tRNA + 5'-deoxyadenosine + L-methionine + 2 oxidized [2Fe-2S]-[ferredoxin] + S-adenosyl-L-homocysteine. Specifically methylates position 2 of adenine 2503 in 23S rRNA and position 2 of adenine 37 in tRNAs. m2A2503 modification seems to play a crucial role in the proofreading step occurring at the peptidyl transferase center and thus would serve to optimize ribosomal fidelity. The protein is Dual-specificity RNA methyltransferase RlmN of Nitrobacter winogradskyi (strain ATCC 25391 / DSM 10237 / CIP 104748 / NCIMB 11846 / Nb-255).